The chain runs to 82 residues: uncharacterized protein (82 aa).

This is an uncharacterized protein from Ictalurid herpesvirus 1 (strain Auburn) (IcHV-1).